We begin with the raw amino-acid sequence, 163 residues long: MSDVENQPFFNIQRVYLKDMSLEQPNSPAIFLEQDMPSVEVEVDVKAERLAESVFEVVVSGTVTAKVKDKVAFLIEAKQAGIFDIRNIPDEQLDPLVGIACPTILFPYLRSNIADAITRAGFPPIHLAEINFQALYEQRLAQLQQQAGAAGAPNGAPNGTTLN.

The protein belongs to the SecB family. In terms of assembly, homotetramer, a dimer of dimers. One homotetramer interacts with 1 SecA dimer.

It localises to the cytoplasm. Functionally, one of the proteins required for the normal export of preproteins out of the cell cytoplasm. It is a molecular chaperone that binds to a subset of precursor proteins, maintaining them in a translocation-competent state. It also specifically binds to its receptor SecA. The chain is Protein-export protein SecB from Burkholderia ambifaria (strain MC40-6).